Here is a 589-residue protein sequence, read N- to C-terminus: Phenylalanine--tRNA ligase beta subunit (589 aa).

A B5 domain is found at 302–379 (LAYRKEMVRA…IAYGYSNIQM (78 aa)). Mg(2+) contacts are provided by D357, D363, E366, and D367.

It belongs to the phenylalanyl-tRNA synthetase beta subunit family. Type 2 subfamily. As to quaternary structure, heterotetramer; dimer of two heterodimers formed by FARSA and FARSB. The cofactor is Mg(2+).

Its subcellular location is the cytoplasm. The enzyme catalyses tRNA(Phe) + L-phenylalanine + ATP = L-phenylalanyl-tRNA(Phe) + AMP + diphosphate + H(+). In Pongo abelii (Sumatran orangutan), this protein is Phenylalanine--tRNA ligase beta subunit (FARSB).